The following is a 79-amino-acid chain: uncharacterized protein (79 aa).

Positions methionine 1–alanine 24 are cleaved as a signal peptide. The LysM domain maps to serine 32–cysteine 78.

It is found in the secreted. This is an uncharacterized protein from Dictyostelium discoideum (Social amoeba).